The chain runs to 41 residues: Virescein (41 aa).

Histidine 41 carries the histidine amide modification.

As to quaternary structure, monomer. In terms of tissue distribution, hemolymph.

The protein resides in the secreted. In terms of biological role, has antibacterial activity against Gram-positive and Gram-negative bacteria. The protein is Virescein of Heliothis virescens (Tobacco budworm moth).